The chain runs to 294 residues: MGDFGNVLTAMITPFKADGSVDYGVAAELAVHLANNGTDTLVMCGTTGESPTLSWDEEYQLFVEVLQSVAGKAKVIAGCGSNSTKEAIAATQKASKIGVHGSLQVVPYYNKPPQAGLEAHFQAIAQACPDLPLLLYNVPGRTGQNLQPETVARLAEVSNIVGIKESTGSIDQASEIRRLTPKEFHIYSGDDYMTLPLLAIGAKGVVSVASHLVGNQLQQMIQAFSAGKIEVARDIHLQLFPLFKALFLTSNPIPVKKALKLQGWEVGSTRPPLCEADLEVSQKLEGVLKELSLI.

Thr-47 contributes to the pyruvate binding site. Tyr-136 serves as the catalytic Proton donor/acceptor. Catalysis depends on Lys-164, which acts as the Schiff-base intermediate with substrate. Residue Val-206 coordinates pyruvate.

Belongs to the DapA family. In terms of assembly, homotetramer; dimer of dimers.

The protein localises to the cytoplasm. It carries out the reaction L-aspartate 4-semialdehyde + pyruvate = (2S,4S)-4-hydroxy-2,3,4,5-tetrahydrodipicolinate + H2O + H(+). It functions in the pathway amino-acid biosynthesis; L-lysine biosynthesis via DAP pathway; (S)-tetrahydrodipicolinate from L-aspartate: step 3/4. Catalyzes the condensation of (S)-aspartate-beta-semialdehyde [(S)-ASA] and pyruvate to 4-hydroxy-tetrahydrodipicolinate (HTPA). The polypeptide is 4-hydroxy-tetrahydrodipicolinate synthase (Nostoc punctiforme (strain ATCC 29133 / PCC 73102)).